The following is a 269-amino-acid chain: Monofunctional glycosyltransferase (269 aa).

Residues 46-66 form a helical membrane-spanning segment; sequence ILLTILIIIALFIGIMYFLST.

It belongs to the glycosyltransferase 51 family.

The protein localises to the cell membrane. The enzyme catalyses [GlcNAc-(1-&gt;4)-Mur2Ac(oyl-L-Ala-gamma-D-Glu-L-Lys-D-Ala-D-Ala)](n)-di-trans,octa-cis-undecaprenyl diphosphate + beta-D-GlcNAc-(1-&gt;4)-Mur2Ac(oyl-L-Ala-gamma-D-Glu-L-Lys-D-Ala-D-Ala)-di-trans,octa-cis-undecaprenyl diphosphate = [GlcNAc-(1-&gt;4)-Mur2Ac(oyl-L-Ala-gamma-D-Glu-L-Lys-D-Ala-D-Ala)](n+1)-di-trans,octa-cis-undecaprenyl diphosphate + di-trans,octa-cis-undecaprenyl diphosphate + H(+). It functions in the pathway cell wall biogenesis; peptidoglycan biosynthesis. Peptidoglycan polymerase that catalyzes glycan chain elongation using lipid-linked disaccharide-pentapeptide as the substrate. The sequence is that of Monofunctional glycosyltransferase from Staphylococcus aureus (strain Newman).